Reading from the N-terminus, the 397-residue chain is Elongation factor Tu (397 aa).

Residues 10–207 (KPHVNVGTIG…TLDTYIPEPV (198 aa)) form the tr-type G domain. The G1 stretch occupies residues 19 to 26 (GHVDHGKT). 19 to 26 (GHVDHGKT) contributes to the GTP binding site. Thr-26 provides a ligand contact to Mg(2+). The G2 stretch occupies residues 60–64 (GITIN). The interval 81–84 (DCPG) is G3. GTP-binding positions include 81–85 (DCPGH) and 136–139 (NKAD). Residues 136-139 (NKAD) are G4. The interval 174 to 176 (SAL) is G5.

Belongs to the TRAFAC class translation factor GTPase superfamily. Classic translation factor GTPase family. EF-Tu/EF-1A subfamily. Monomer.

The protein localises to the cytoplasm. It catalyses the reaction GTP + H2O = GDP + phosphate + H(+). Its function is as follows. GTP hydrolase that promotes the GTP-dependent binding of aminoacyl-tRNA to the A-site of ribosomes during protein biosynthesis. The polypeptide is Elongation factor Tu (Ectopseudomonas mendocina (strain ymp) (Pseudomonas mendocina)).